Reading from the N-terminus, the 1209-residue chain is DNA-directed RNA polymerase subunit beta (1209 aa).

Basic and acidic residues predominate over residues 1173–1192; it reads QQEKKKLAEEAAKKDDKPDE. Residues 1173–1209 are disordered; that stretch reads QQEKKKLAEEAAKKDDKPDEPVDESDSSTSSDDKVSK.

The protein belongs to the RNA polymerase beta chain family. In terms of assembly, the RNAP catalytic core consists of 2 alpha, 1 beta, 1 beta' and 1 omega subunit. When a sigma factor is associated with the core the holoenzyme is formed, which can initiate transcription.

It catalyses the reaction RNA(n) + a ribonucleoside 5'-triphosphate = RNA(n+1) + diphosphate. DNA-dependent RNA polymerase catalyzes the transcription of DNA into RNA using the four ribonucleoside triphosphates as substrates. The sequence is that of DNA-directed RNA polymerase subunit beta from Lactobacillus johnsonii (strain CNCM I-12250 / La1 / NCC 533).